A 372-amino-acid chain; its full sequence is Chaperone protein DnaJ (372 aa).

A J domain is found at 3–68 (NLYEILEVNE…EKRKKYDMYG (66 aa)). The CR-type zinc-finger motif lies at 130 to 212 (GTKKEISYKK…CKGKGYEIER (83 aa)). Residues Cys143, Cys146, Cys160, Cys163, Cys186, Cys189, Cys200, and Cys203 each contribute to the Zn(2+) site. CXXCXGXG motif repeat units lie at residues 143 to 150 (CHVCNGDG), 160 to 167 (CEKCHGTG), 186 to 193 (CDKCHGEG), and 200 to 207 (CENCKGKG).

The protein belongs to the DnaJ family. In terms of assembly, homodimer. Zn(2+) is required as a cofactor.

It is found in the cytoplasm. In terms of biological role, participates actively in the response to hyperosmotic and heat shock by preventing the aggregation of stress-denatured proteins and by disaggregating proteins, also in an autonomous, DnaK-independent fashion. Unfolded proteins bind initially to DnaJ; upon interaction with the DnaJ-bound protein, DnaK hydrolyzes its bound ATP, resulting in the formation of a stable complex. GrpE releases ADP from DnaK; ATP binding to DnaK triggers the release of the substrate protein, thus completing the reaction cycle. Several rounds of ATP-dependent interactions between DnaJ, DnaK and GrpE are required for fully efficient folding. Also involved, together with DnaK and GrpE, in the DNA replication of plasmids through activation of initiation proteins. The polypeptide is Chaperone protein DnaJ (Finegoldia magna (strain ATCC 29328 / DSM 20472 / WAL 2508) (Peptostreptococcus magnus)).